The chain runs to 1802 residues: Signaling mucin HKR1 (1802 aa).

A signal peptide spans 1–21 (MVSLKIKKILLLVSLLNAIEA). The Extracellular segment spans residues 22–1485 (YSNDTIYSTS…SASAGKYAVK (1464 aa)). Asn-24 is a glycosylation site (N-linked (GlcNAc...) asparagine). 2 disordered regions span residues 47–176 (ISST…PREI) and 261–311 (YSSS…VSRP). Over residues 54-81 (NKENAITSSSETTTMAGQYGESGSTTIM) the composition is skewed to polar residues. Low complexity predominate over residues 88 to 107 (TSSQYISVTTTTQTSDTMSS). Residues 113 to 143 (EIATPSSSIVPTPLQSYSDESQISQTLSHNP) show a composition bias toward polar residues. 2 stretches are compositionally biased toward low complexity: residues 145-172 (SVAE…SSAV) and 261-302 (YSSS…SESS). A 1; approximate repeat occupies 453–480 (SVPVAVSSTYTSSPSASVVVPSAYASSP). Residues 453 to 788 (SVPVAVSSTY…VLSSTSTSSP (336 aa)) form a 12 X 28 AA tandem repeats of S-[AV]-[P]-V-A-V-S-S-T-Y-T-S-S-P-S-A-P-A-A-I-S-S-T-Y-T-S-S-P region. 11 consecutive repeat copies span residues 481–508 (SVPV…TSSP), 509–536 (SAPV…TSSP), 537–564 (SAPV…TSSP), 565–592 (SAPV…TSSP), 593–620 (SVPV…TSSP), 621–648 (SAPV…TSSP), 649–676 (SVPV…TSSP), 677–704 (SVPV…TSSP), 705–732 (SAPV…TSSP), 733–760 (SAPV…TSSP), and 761–788 (SAPV…TSSP). Disordered regions lie at residues 961 to 984 (SLQS…TETS) and 1067 to 1165 (ETIP…SYSR). Polar residues-rich tracts occupy residues 970 to 984 (TKNP…TETS) and 1071 to 1123 (ASKS…TNTK). Residues 1136-1165 (TMGENGEETGLTTTKTQYKSSSETSGSYSR) are compositionally biased toward low complexity. Asn-1252, Asn-1293, Asn-1342, and Asn-1400 each carry an N-linked (GlcNAc...) asparagine glycan. The helical transmembrane segment at 1486 to 1506 (IIIFLIVLTIGVLLWLFVAFF) threads the bilayer. Topologically, residues 1507 to 1802 (AFRHRNILLK…KQQNHQTTKI (296 aa)) are cytoplasmic. The segment at 1534–1559 (ESTELSRSSSGNQVYNEKPPESENES) is disordered.

This sequence belongs to the HKR1/MSB2 family. In terms of processing, could be O-glycosylated in the serine/threonine-rich domain.

The protein localises to the cell membrane. Functionally, plasma membrane signaling mucin that promotes activation of the MAPK for the filamentous growth pathway. May regulate beta-glucan synthesis. Overexpression provides resistance to HM-1 killer toxin. In Saccharomyces cerevisiae (strain ATCC 204508 / S288c) (Baker's yeast), this protein is Signaling mucin HKR1 (HKR1).